A 184-amino-acid chain; its full sequence is H(2)/formate:CoB-CoM heterodisulfide,ferredoxin reductase subunit C2 (184 aa).

4Fe-4S ferredoxin-type domains are found at residues Gly24–Thr54 and Ile65–Ile97. Residues Cys34, Cys37, Cys40, Cys44, Cys77, Cys80, Cys83, and Cys87 each coordinate [4Fe-4S] cluster.

The protein belongs to the HdrC family. As to quaternary structure, the heterodisulfide reductase is composed of three subunits; HdrA, HdrB and HdrC. B1 and B2 subunits are interchangeable, as are the C1 and C2 subunits. The heterodisulfide reductase forms a supercomplex with formylmethanofuran dehydrogenase (Fwd), F(420)-non-reducing hydrogenase (Vhu) and formate dehydrogenase (Fdh). Requires [4Fe-4S] cluster as cofactor.

It carries out the reaction coenzyme B + coenzyme M + 2 reduced [2Fe-2S]-[ferredoxin] + 2 H(+) = coenzyme M-coenzyme B heterodisulfide + 2 H2 + 2 oxidized [2Fe-2S]-[ferredoxin]. The enzyme catalyses coenzyme B + coenzyme M + 2 reduced [2Fe-2S]-[ferredoxin] + 2 CO2 = coenzyme M-coenzyme B heterodisulfide + 2 formate + 2 oxidized [2Fe-2S]-[ferredoxin]. It participates in cofactor metabolism; coenzyme M-coenzyme B heterodisulfide reduction; coenzyme B and coenzyme M from coenzyme M-coenzyme B heterodisulfide: step 1/1. Its function is as follows. Part of a complex that catalyzes the reversible reduction of CoM-S-S-CoB to the thiol-coenzymes H-S-CoM (coenzyme M) and H-S-CoB (coenzyme B). In Methanococcus maripaludis (strain DSM 14266 / JCM 13030 / NBRC 101832 / S2 / LL), this protein is H(2)/formate:CoB-CoM heterodisulfide,ferredoxin reductase subunit C2.